The primary structure comprises 502 residues: Lysine--tRNA ligase (502 aa).

Mg(2+) is bound by residues Glu411 and Glu418.

Belongs to the class-II aminoacyl-tRNA synthetase family. As to quaternary structure, homodimer. Mg(2+) serves as cofactor.

It localises to the cytoplasm. It carries out the reaction tRNA(Lys) + L-lysine + ATP = L-lysyl-tRNA(Lys) + AMP + diphosphate. The chain is Lysine--tRNA ligase from Clostridium tetani (strain Massachusetts / E88).